The sequence spans 351 residues: Ribosomal RNA large subunit methyltransferase M (351 aa).

Residues Ser186, 219-222 (APGG), Asp238, Asp258, and Asp274 contribute to the S-adenosyl-L-methionine site. Residue Lys303 is the Proton acceptor of the active site.

The protein belongs to the class I-like SAM-binding methyltransferase superfamily. RNA methyltransferase RlmE family. RlmM subfamily. Monomer.

The protein resides in the cytoplasm. The enzyme catalyses cytidine(2498) in 23S rRNA + S-adenosyl-L-methionine = 2'-O-methylcytidine(2498) in 23S rRNA + S-adenosyl-L-homocysteine + H(+). Its function is as follows. Catalyzes the 2'-O-methylation at nucleotide C2498 in 23S rRNA. The chain is Ribosomal RNA large subunit methyltransferase M from Xylella fastidiosa (strain 9a5c).